The following is a 251-amino-acid chain: Tryptophan synthase alpha chain (251 aa).

Catalysis depends on proton acceptor residues E46 and D57.

Belongs to the TrpA family. Tetramer of two alpha and two beta chains.

The catalysed reaction is (1S,2R)-1-C-(indol-3-yl)glycerol 3-phosphate + L-serine = D-glyceraldehyde 3-phosphate + L-tryptophan + H2O. The protein operates within amino-acid biosynthesis; L-tryptophan biosynthesis; L-tryptophan from chorismate: step 5/5. In terms of biological role, the alpha subunit is responsible for the aldol cleavage of indoleglycerol phosphate to indole and glyceraldehyde 3-phosphate. The protein is Tryptophan synthase alpha chain of Karelsulcia muelleri (strain GWSS) (Sulcia muelleri).